We begin with the raw amino-acid sequence, 787 residues long: Endonuclease MutS2 (787 aa).

334-341 (GPNTGGKT) lines the ATP pocket. Positions 712-787 (LDLRGKRYEE…GNGATIVTFK (76 aa)) constitute a Smr domain.

Belongs to the DNA mismatch repair MutS family. MutS2 subfamily. In terms of assembly, homodimer. Binds to stalled ribosomes, contacting rRNA.

Its function is as follows. Endonuclease that is involved in the suppression of homologous recombination and thus may have a key role in the control of bacterial genetic diversity. In terms of biological role, acts as a ribosome collision sensor, splitting the ribosome into its 2 subunits. Detects stalled/collided 70S ribosomes which it binds and splits by an ATP-hydrolysis driven conformational change. Acts upstream of the ribosome quality control system (RQC), a ribosome-associated complex that mediates the extraction of incompletely synthesized nascent chains from stalled ribosomes and their subsequent degradation. Probably generates substrates for RQC. The sequence is that of Endonuclease MutS2 from Latilactobacillus sakei subsp. sakei (strain 23K) (Lactobacillus sakei subsp. sakei).